The sequence spans 37 residues: Large ribosomal subunit protein bL36 (37 aa).

It belongs to the bacterial ribosomal protein bL36 family.

This Gloeobacter violaceus (strain ATCC 29082 / PCC 7421) protein is Large ribosomal subunit protein bL36.